A 20-amino-acid chain; its full sequence is Succinate--CoA ligase [ADP-forming] subunit beta, mitochondrial (20 aa).

The region spanning 8 to 20 is the ATP-grasp domain; it reads SMELLQEAGVSIP.

The protein belongs to the succinate/malate CoA ligase beta subunit family. ATP-specific subunit beta subfamily. As to quaternary structure, heterodimer of an alpha and a beta subunit. The beta subunit determines specificity for ATP. Interacts with ALAS2.

It localises to the mitochondrion. It catalyses the reaction succinate + ATP + CoA = succinyl-CoA + ADP + phosphate. The protein operates within carbohydrate metabolism; tricarboxylic acid cycle; succinate from succinyl-CoA (ligase route): step 1/1. Functionally, ATP-specific succinyl-CoA synthetase functions in the citric acid cycle (TCA), coupling the hydrolysis of succinyl-CoA to the synthesis of ATP and thus represents the only step of substrate-level phosphorylation in the TCA. The beta subunit provides nucleotide specificity of the enzyme and binds the substrate succinate, while the binding sites for coenzyme A and phosphate are found in the alpha subunit. In Canis lupus familiaris (Dog), this protein is Succinate--CoA ligase [ADP-forming] subunit beta, mitochondrial.